Consider the following 279-residue polypeptide: Methyltransferase ausD (279 aa).

S-adenosyl-L-methionine is bound by residues 124–125 (DL), 152–153 (DI), and Arg-244.

Belongs to the class I-like SAM-binding methyltransferase superfamily. As to quaternary structure, homodimer.

It functions in the pathway secondary metabolite biosynthesis; terpenoid biosynthesis. Methyltransferase; part of the gene cluster that mediates the biosynthesis of calidodehydroaustin, a fungal meroterpenoid. The first step of the pathway is the synthesis of 3,5-dimethylorsellinic acid by the polyketide synthase ausA. 3,5-dimethylorsellinic acid is then prenylated by the polyprenyl transferase ausN. Further epoxidation by the FAD-dependent monooxygenase ausM and cyclization by the probable terpene cyclase ausL lead to the formation of protoaustinoid A. Protoaustinoid A is then oxidized to spiro-lactone preaustinoid A3 by the combined action of the FAD-binding monooxygenases ausB and ausC, and the dioxygenase ausE. Acid-catalyzed keto-rearrangement and ring contraction of the tetraketide portion of preaustinoid A3 by ausJ lead to the formation of preaustinoid A4. The aldo-keto reductase ausK, with the help of ausH, is involved in the next step by transforming preaustinoid A4 into isoaustinone which is in turn hydroxylated by the P450 monooxygenase ausI to form austinolide. The cytochrome P450 monooxygenase ausG modifies austinolide to austinol. Austinol is further acetylated to austin by the O-acetyltransferase ausP, which spontaneously changes to dehydroaustin. The cytochrome P450 monooxygenase ausR then converts dehydroaustin is into 7-dehydrodehydroaustin. The hydroxylation catalyzed by ausR permits the O-acetyltransferase ausQ to add an additional acetyl group to the molecule, leading to the formation of acetoxydehydroaustin. The short chain dehydrogenase ausT catalyzes the reduction of the double bond present between carbon atoms 1 and 2 to convert 7-dehydrodehydroaustin into 1,2-dihydro-7-hydroxydehydroaustin. AusQ catalyzes not only an acetylation reaction but also the addition of the PKS ausV diketide product to 1,2-dihydro-7-hydroxydehydroaustin, forming precalidodehydroaustin. Finally, the iron/alpha-ketoglutarate-dependent dioxygenase converts precalidodehydroaustin into calidodehydroaustin. The sequence is that of Methyltransferase ausD from Aspergillus calidoustus.